Consider the following 55-residue polypeptide: uncharacterized protein (55 aa).

This is an uncharacterized protein from Dictyostelium discoideum (Social amoeba).